Here is a 339-residue protein sequence, read N- to C-terminus: Ketol-acid reductoisomerase (NADP(+)) (339 aa).

The 182-residue stretch at Met-1–Thr-182 folds into the KARI N-terminal Rossmann domain. Residues Tyr-24 to Gln-27, Lys-48, Ser-51, Thr-53, and Asp-83 to Gln-86 each bind NADP(+). The active site involves His-108. Residue Gly-134 coordinates NADP(+). One can recognise a KARI C-terminal knotted domain in the interval Asn-183–Ile-328. Asp-191, Glu-195, Glu-227, and Glu-231 together coordinate Mg(2+). Ser-252 is a substrate binding site.

This sequence belongs to the ketol-acid reductoisomerase family. Mg(2+) is required as a cofactor.

It carries out the reaction (2R)-2,3-dihydroxy-3-methylbutanoate + NADP(+) = (2S)-2-acetolactate + NADPH + H(+). The enzyme catalyses (2R,3R)-2,3-dihydroxy-3-methylpentanoate + NADP(+) = (S)-2-ethyl-2-hydroxy-3-oxobutanoate + NADPH + H(+). The protein operates within amino-acid biosynthesis; L-isoleucine biosynthesis; L-isoleucine from 2-oxobutanoate: step 2/4. It functions in the pathway amino-acid biosynthesis; L-valine biosynthesis; L-valine from pyruvate: step 2/4. Its function is as follows. Involved in the biosynthesis of branched-chain amino acids (BCAA). Catalyzes an alkyl-migration followed by a ketol-acid reduction of (S)-2-acetolactate (S2AL) to yield (R)-2,3-dihydroxy-isovalerate. In the isomerase reaction, S2AL is rearranged via a Mg-dependent methyl migration to produce 3-hydroxy-3-methyl-2-ketobutyrate (HMKB). In the reductase reaction, this 2-ketoacid undergoes a metal-dependent reduction by NADPH to yield (R)-2,3-dihydroxy-isovalerate. The protein is Ketol-acid reductoisomerase (NADP(+)) of Sinorhizobium medicae (strain WSM419) (Ensifer medicae).